Consider the following 245-residue polypeptide: Ribonuclease PH (245 aa).

Residues Arg-86 and 124–126 contribute to the phosphate site; that span reads GTR.

This sequence belongs to the RNase PH family. Homohexameric ring arranged as a trimer of dimers.

It catalyses the reaction tRNA(n+1) + phosphate = tRNA(n) + a ribonucleoside 5'-diphosphate. Phosphorolytic 3'-5' exoribonuclease that plays an important role in tRNA 3'-end maturation. Removes nucleotide residues following the 3'-CCA terminus of tRNAs; can also add nucleotides to the ends of RNA molecules by using nucleoside diphosphates as substrates, but this may not be physiologically important. Probably plays a role in initiation of 16S rRNA degradation (leading to ribosome degradation) during starvation. The sequence is that of Ribonuclease PH from Bacillus cereus (strain ATCC 10987 / NRS 248).